The chain runs to 278 residues: Cation-dependent mannose-6-phosphate receptor (278 aa).

The first 21 residues, methionine 1–alanine 21, serve as a signal peptide directing secretion. Residues valine 22 to serine 188 lie on the Lumenal side of the membrane. The MRH domain maps to lysine 31 to proline 182. A disulfide bridge links cysteine 33 with cysteine 79. N-linked (GlcNAc...) asparagine glycosylation is found at asparagine 58, asparagine 84, asparagine 95, asparagine 108, and asparagine 114. 2 disulfide bridges follow: cysteine 133–cysteine 168 and cysteine 146–cysteine 180. The helical transmembrane segment at valine 189–phenylalanine 209 threads the bilayer. The Cytoplasmic portion of the chain corresponds to leucine 210 to methionine 278. The segment at tyrosine 256–methionine 278 is disordered. Serine 268 carries the phosphoserine modification.

As to quaternary structure, homodimer. Binds GGA1, GGA2 and GGA3.

It is found in the lysosome membrane. Functionally, transport of phosphorylated lysosomal enzymes from the Golgi complex and the cell surface to lysosomes. Lysosomal enzymes bearing phosphomannosyl residues bind specifically to mannose-6-phosphate receptors in the Golgi apparatus and the resulting receptor-ligand complex is transported to an acidic prelyosomal compartment where the low pH mediates the dissociation of the complex. This Rattus norvegicus (Rat) protein is Cation-dependent mannose-6-phosphate receptor (M6pr).